We begin with the raw amino-acid sequence, 1485 residues long: Putative E3 ubiquitin-protein ligase LIN-1 (1485 aa).

Residues 337–353 (EENEDDSDSELENESVD) show a composition bias toward acidic residues. 2 disordered regions span residues 337 to 363 (EENE…IFSP) and 384 to 417 (NQIP…KRDS). In terms of domain architecture, U-box spans 510 to 585 (KPPKDFVCPI…TSWKEQNPEL (76 aa)). WD repeat units follow at residues 1204 to 1241 (SSNG…PRVI), 1246 to 1283 (EHTK…IKCI), 1409 to 1448 (SLST…RVAS), and 1454 to 1485 (GHTK…WALD).

Expressed in roots and nodules, and at very low levels in calli and seedling shoots.

It catalyses the reaction S-ubiquitinyl-[E2 ubiquitin-conjugating enzyme]-L-cysteine + [acceptor protein]-L-lysine = [E2 ubiquitin-conjugating enzyme]-L-cysteine + N(6)-ubiquitinyl-[acceptor protein]-L-lysine.. The protein operates within protein modification; protein ubiquitination. In terms of biological role, putative E3 ubiquitin-protein ligase involved in the rhizobial infection process. Plays an important role in the early steps of infection thread formation and in growth and differentiation of nodules. The polypeptide is Putative E3 ubiquitin-protein ligase LIN-1 (Lotus japonicus (Lotus corniculatus var. japonicus)).